We begin with the raw amino-acid sequence, 93 residues long: Sec-independent protein translocase protein TatA (93 aa).

Residues 1–21 form a helical membrane-spanning segment; the sequence is MGNVFSGWHLLVILLVIVLLF. The segment at 49–93 is disordered; the sequence is DITRSQDGHPDSQGNFAESASSVPFVKSEKQSEKRASVTEAKKSK. A compositionally biased stretch (polar residues) spans 60 to 70; sequence SQGNFAESASS. The segment covering 75 to 93 has biased composition (basic and acidic residues); the sequence is KSEKQSEKRASVTEAKKSK.

It belongs to the TatA/E family. The Tat system comprises two distinct complexes: a TatABC complex, containing multiple copies of TatA, TatB and TatC subunits, and a separate TatA complex, containing only TatA subunits. Substrates initially bind to the TatABC complex, which probably triggers association of the separate TatA complex to form the active translocon.

The protein localises to the cell membrane. In terms of biological role, part of the twin-arginine translocation (Tat) system that transports large folded proteins containing a characteristic twin-arginine motif in their signal peptide across membranes. TatA could form the protein-conducting channel of the Tat system. This Tropheryma whipplei (strain TW08/27) (Whipple's bacillus) protein is Sec-independent protein translocase protein TatA.